Reading from the N-terminus, the 1323-residue chain is MPENTAIASIFTAIVCFKFIILTLEAKEKSNLIRPEFKHPSPEQAAGILNRSFFWWFNPLLLTGSKQRLAVDDLFFNDDGLTFDAWRDIITRRWAKADISKPHALLKVMLATFKGLLLAGILPRLCLTGPETTTSNKVAYGLIAAYAIVYIGIAVMSTMSQHKNYRTIVAIRGSAVSLIYQHTLRLTSSSTSTSSSLTLINNDVERMGHGMREVHEIWASLIEIALSLWLLEVRLGVSVVAAVFVIIGNICTLLGCVFGFVKMGLLLGDRQKVWLEAIEKRTSSTIATLGSIRGIKSTGATDIVQRITTRLRLDEIRISLKYRELLVGIVTLSYVSTTMAPVFAFATYSIISNSRGTTPLLAASAYTSLTIFSLLGQAVSKWISSSVDIITTIACLERVRQYLATNLRVDPRTIESYIKPIDSSNSPRLRNSDISQTEMLDMGSVDQSQYHPNSVGEVLREVPLAKMMITIRDCSACWSKGSEMAISEINLTILKGSLAMVIGPIGSGKSTLLKVILGEMPHTTGTVIVGRSEAAFCGQSPWLTNVSVRNNIIGVSYLDANWYNTVVNACALDRDFEQLPDGDNTVIGSKGVLLSGGQKSRLALARALYARNDLVILDDVFSGLDAKTEQRVFESVLGSHGILRQGGTTTVLATNSVRNISLADHIVVMGSDGKITDQGTYQNLVFASSYLESLGTRQKTLNISDSEKSKDDTVSGLAVASAMHQPVDSDNRGDKDLTIYKYYIDTVGWVTWWVFVLLCSGFVFGLVFPQIWIQFWTEANARQANYRLAYYLSLYALWPLMAIVIFLGACAWLMIRMVSKAAIQFHGILLNSALSAPLVYFSTTDSGEVSNRFTQDLNLIDMELPTALIGTTVTFLSCIAQIGVIIYGSSYVAAAIPALIVFLYYIQLFYLRTSRQLRLLELEAKAPLLSHFMESIHGLVTIRAFGWTEKFTHQNHDLLERSQRPFYLLYCAQRWLNLTLELAVAFLAIILVSIALTTRESSGAKIGVALLSIVGFGLNLKTLVYTWTSLEIAMGAVSRIRHFAINTSSEDLPGEDRTLPPDWPHEGVIRFQSVSAAYSPTSHPVLNDLSFTVKAGTKVAICGRTGSGKSSTLAALLRLIDLRSGAITIDGIDISTVVRQDLRSKLITLPQEPFYYHASIRDNLDVRGQFSTEELLDILEVVGMREVIDKKGGLDAMANADVLSHGQSQLLCLARAILRPNKILILDEATSSVDKKTEEKMVDIIREKFQDRTVISVAHNLNTIMDYDEVIVLEAGRIIEQGKPLALALEPSFFASLLKAADGESEDALEEETISNIASPRSR.

A run of 7 helical transmembrane segments spans residues 6-26, 102-122, 138-158, 217-237, 240-260, 325-345, and 359-379; these read AIASIFTAIVCFKFIILTLEA, PHALLKVMLATFKGLLLAGIL, VAYGLIAAYAIVYIGIAVMST, IWASLIEIALSLWLLEVRLGV, VAAVFVIIGNICTLLGCVFGF, LLVGIVTLSYVSTTMAPVFAF, and PLLAASAYTSLTIFSLLGQAV. The ABC transmembrane type-1 1 domain maps to 142–380; the sequence is LIAAYAIVYI…IFSLLGQAVS (239 aa). The ABC transporter 1 domain maps to 471-697; that stretch reads IRDCSACWSK…SSYLESLGTR (227 aa). ATP is bound at residue 503–510; sequence GPIGSGKS. 7 consecutive transmembrane segments (helical) span residues 748–768, 795–815, 821–841, 859–879, 891–910, 976–996, and 1006–1026; these read GWVTWWVFVLLCSGFVFGLVF, YALWPLMAIVIFLGACAWLMI, AAIQFHGILLNSALSAPLVYF, LIDMELPTALIGTTVTFLSCI, YVAAAIPALIVFLYYIQLFY, LNLTLELAVAFLAIILVSIAL, and IGVALLSIVGFGLNLKTLVYT. One can recognise an ABC transmembrane type-1 2 domain in the interval 752–1031; it reads WWVFVLLCSG…TLVYTWTSLE (280 aa). The 232-residue stretch at 1069–1300 folds into the ABC transporter 2 domain; sequence IRFQSVSAAY…PSFFASLLKA (232 aa). 1103 to 1110 provides a ligand contact to ATP; it reads GRTGSGKS.

Belongs to the ABC transporter superfamily. ABCC family. Conjugate transporter (TC 3.A.1.208) subfamily.

It localises to the cell membrane. 3-isopropylmalate dehydratase large subunit; part of the gene cluster that mediates the biosynthesis of pneumocandins, lipohexapeptides of the echinocandin family that prevent fungal cell wall formation by non-competitive inhibition of beta-1,3-glucan synthase. Possibly secretes antifungal pneumocandins, thus avoiding of intracellular accumulation and ameliorating the toxicity to the producing cells. The sequence is that of ABC transporter gloK from Glarea lozoyensis (strain ATCC 20868 / MF5171).